A 335-amino-acid chain; its full sequence is Calcium/calmodulin-dependent protein kinase type I (335 aa).

The 261-residue stretch at 31–291 (YRVGRVLGGG…AADALKHPFL (261 aa)) folds into the Protein kinase domain. ATP is bound at residue 37–45 (LGGGTYATV). Catalysis depends on Asp154, which acts as the Proton acceptor. Thr192 carries the phosphothreonine; by autocatalysis modification. The tract at residues 310–334 (NARKTFRTAYNAVRAFNTWKKLENK) is calmodulin-binding.

This sequence belongs to the protein kinase superfamily. CAMK Ser/Thr protein kinase family. CaMK subfamily.

It is found in the cytoplasm. It catalyses the reaction L-seryl-[protein] + ATP = O-phospho-L-seryl-[protein] + ADP + H(+). The enzyme catalyses L-threonyl-[protein] + ATP = O-phospho-L-threonyl-[protein] + ADP + H(+). Important in cell cycle regulation. In Schizosaccharomyces pombe (strain 972 / ATCC 24843) (Fission yeast), this protein is Calcium/calmodulin-dependent protein kinase type I (cmk1).